The sequence spans 139 residues: Low molecular weight protein-tyrosine-phosphatase PtpB (139 aa).

Cys7 acts as the Nucleophile in catalysis. The active site involves Arg13. Asp111 (proton donor) is an active-site residue.

The protein belongs to the low molecular weight phosphotyrosine protein phosphatase family.

The catalysed reaction is O-phospho-L-tyrosyl-[protein] + H2O = L-tyrosyl-[protein] + phosphate. Its activity is regulated as follows. Inhibited by N-ethylmaleimide and sodium orthovanadate. Its function is as follows. Dephosphorylates the phosphotyrosine-containing proteins. In Staphylococcus aureus, this protein is Low molecular weight protein-tyrosine-phosphatase PtpB (ptpB).